A 309-amino-acid polypeptide reads, in one-letter code: Dicarboxylate carrier UCP2 (309 aa).

The Mitochondrial intermembrane segment spans residues 1-16 (MVGFKATDVPPTATVK). Solcar repeat units lie at residues 11–106 (PTAT…VKQF), 114–203 (AGIG…IKDT), and 212–297 (DDLP…LKRA). Positions 16–63 (KFLGAGTAACIADLITFPLDTAKVRLQIQGESQGLARTAASAQYRGVL) are important for interaction with long-chain fatty acids. The chain crosses the membrane as a helical span at residues 17-40 (FLGAGTAACIADLITFPLDTAKVR). The Mitochondrial matrix portion of the chain corresponds to 41–77 (LQIQGESQGLARTAASAQYRGVLGTILTMVRTEGPRS). The chain crosses the membrane as a helical span at residues 78–103 (LYNGLVAGLQRQMSFASVRIGLYDSV). Topologically, residues 104-119 (KQFYTKGSEHAGIGSR) are mitochondrial intermembrane. The helical transmembrane segment at 120–145 (LLAGSTTGALAVAVAQPTDVVKVRFQ) threads the bilayer. Topologically, residues 146-173 (AQARAGGGRRYQSTVEAYKTIAREEGIR) are mitochondrial matrix. Residues 174–199 (GLWKGTSPNVARNAIVNCTELVTYDL) form a helical membrane-spanning segment. The Mitochondrial intermembrane portion of the chain corresponds to 200–217 (IKDTLLKANLMTDDLPCH). Residues 218–242 (FTSAFGAGFCTTVIASPVDVVKTRY) traverse the membrane as a helical segment. The Mitochondrial matrix portion of the chain corresponds to 243–268 (MNSALGQYHSAGHCALTMLRKEGPRA). The chain crosses the membrane as a helical span at residues 269–294 (FYKGFMPSFLRLGSWNVVMFVTYEQL). The interval 278 to 285 (LRLGSWNV) is important for interaction with long-chain fatty acids. Over 295-309 (KRALMAAYESREAPF) the chain is Mitochondrial intermembrane.

Belongs to the mitochondrial carrier (TC 2.A.29) family. Homotetramer. Adopts an asymmetrical dimer of dimers functional form. Interacts with MICU1 (when methylated); leading to decrease the calcium sensitivity of MICU1. As to expression, expressed in a variety of organs, with predominant expression in the heart, lung and spleen.

Its subcellular location is the mitochondrion inner membrane. It carries out the reaction L-aspartate(out) + phosphate(in) + H(+)(in) = L-aspartate(in) + phosphate(out) + H(+)(out). The catalysed reaction is oxaloacetate(out) + phosphate(in) + H(+)(in) = oxaloacetate(in) + phosphate(out) + H(+)(out). The enzyme catalyses (S)-malate(out) + phosphate(in) + H(+)(in) = (S)-malate(in) + phosphate(out) + H(+)(out). It catalyses the reaction malonate(out) + phosphate(in) + H(+)(in) = malonate(in) + phosphate(out) + H(+)(out). It carries out the reaction sulfate(out) + phosphate(in) + H(+)(in) = sulfate(in) + phosphate(out) + H(+)(out). The catalysed reaction is (S)-malate(out) = (S)-malate(in). The enzyme catalyses L-aspartate(out) = L-aspartate(in). It catalyses the reaction phosphate(in) = phosphate(out). It carries out the reaction chloride(in) = chloride(out). The catalysed reaction is H(+)(in) = H(+)(out). The enzyme catalyses a long-chain fatty acid(out) = a long-chain fatty acid(in). In terms of biological role, antiporter that exports dicarboxylate intermediates of the Krebs cycle in exchange for phosphate plus a proton across the inner membrane of mitochondria, a process driven by mitochondrial motive force with an overall impact on glycolysis, glutaminolysis and glutathione-dependent redox balance. Continuous export of oxaloacetate and related four-carbon dicarboxylates from mitochondrial matrix into the cytosol negatively regulates the oxidation of acetyl-CoA substrates via the Krebs cycle lowering the ATP/ADP ratio and reactive oxygen species (ROS) production. May mediate inducible proton entry into the mitochondrial matrix affecting ATP turnover as a protection mechanism against oxidative stress. The proton currents are most likely associated with fatty acid flipping across the inner membrane of mitochondria in a metabolic process regulated by free fatty acids and purine nucleotides. Regulates the use of glucose as a source of energy. Required for glucose-induced DRP1-dependent mitochondrial fission and neuron activation in the ventromedial nucleus of the hypothalamus (VMH). This mitochondrial adaptation mechanism modulates the VMH pool of glucose-excited neurons with an impact on systemic glucose homeostasis. Regulates ROS levels and metabolic reprogramming of macrophages during the resolution phase of inflammation. Attenuates ROS production in response to IL33 to preserve the integrity of the Krebs cycle required for persistent production of itaconate and subsequent GATA3-dependent differentiation of inflammation-resolving alternatively activated macrophages. Can unidirectionally transport anions including L-malate, L-aspartate, phosphate and chloride ions. Does not mediate adaptive thermogenesis. The sequence is that of Dicarboxylate carrier UCP2 (Ucp2) from Rattus norvegicus (Rat).